The sequence spans 628 residues: Basal cell adhesion molecule (628 aa).

The signal sequence occupies residues 1–31; that stretch reads MEPPDARAGARRAPRLLVLALLLAAPPGSKA. 2 consecutive Ig-like V-type domains span residues 32–142 and 150–253; these read EVRL…ARLK and PEVS…RLDG. Over 32-547 the chain is Extracellular; that stretch reads EVRLSVPPLV…GTVAPQTSQA (516 aa). 3 cysteine pairs are disulfide-bonded: C53–C125, C172–C237, and C291–C337. 3 Ig-like C2-type domains span residues 254-355, 355-441, and 448-538; these read PSFS…KTLE, ELRV…RSFR, and PELK…FHFG. 3 N-linked (GlcNAc...) asparagine glycosylation sites follow: N321, N330, and N378. Cystine bridges form between C384-C424 and C473-C522. The chain crosses the membrane as a helical span at residues 548–568; the sequence is GVAVMAVAISVALLLLVVAVF. Residues 569 to 628 are Cytoplasmic-facing; the sequence is YCMRRKGRPGCCQWGEKGSPPPGEPKLSHSGSQRPEQTGLLMGSASGGAKHGSGGFGDEC. The interval 580-628 is disordered; that stretch reads CQWGEKGSPPPGEPKLSHSGSQRPEQTGLLMGSASGGAKHGSGGFGDEC. A phosphoserine mark is found at S596, S598, S600, and S621. Over residues 613 to 628 the composition is skewed to gly residues; sequence ASGGAKHGSGGFGDEC.

In terms of assembly, homodimer. Interacts with ITGA4:ITGB1. Interacts with spectrins SPTA1 and SPTB1. Epinephrine-stimulated phosphorylation of Ser-621 by PKA enhances adhesion to laminin. Ser-621 can also be phosphorylated by AKT1.

Its subcellular location is the cell membrane. In terms of biological role, transmembrane glycoprotein that functions as both a receptor and an adhesion molecule playing a crucial role in cell adhesion, motility, migration and invasion. Extracellular domain enables binding to extracellular matrix proteins, such as laminin, integrin and other ligands while its intracellular domain interacts with cytoskeletal proteins like hemoglobin, facilitating cell signal transduction. Serves as a receptor for laminin alpha-5/LAMA5 to promote cell adhesion. Mechanistically, JAK2 induces BCAM phosphorylation and activates its adhesion to laminin by stimulating a Rap1/AKT signaling pathway in the absence of EPOR. The protein is Basal cell adhesion molecule (BCAM) of Bos taurus (Bovine).